A 227-amino-acid polypeptide reads, in one-letter code: MNIKGSPWKGSLLLLLVSNLLLCQNVAPLPICPGGAARCQVTLRDLFDRAVVLSHYIHNLSSEMFSEFDKRYTHGRGFITRAINSCHTSSLPTPEDKEQAQQMNQKDFLSLIVSILRSWNEPLYHLVTEVRGMEEAPEAILSKAVEIEEQTKRLLEGMELIVSQVHPETKENEIYPVWTGLPSLQMADEESRLSAYYNLLHCLRRDSHKIDNYLKLLKCRIIHNNNC.

An N-terminal signal peptide occupies residues 1 to 28 (MNIKGSPWKGSLLLLLVSNLLLCQNVAP). Cysteines 32 and 39 form a disulfide. S54 bears the Phosphoserine mark. An N-linked (GlcNAc...) asparagine glycan is attached at N59. Phosphoserine is present on residues S62 and S118. Cystine bridges form between C86/C202 and C219/C227.

Belongs to the somatotropin/prolactin family. As to quaternary structure, interacts with PRLR.

The protein localises to the secreted. Its function is as follows. Prolactin acts primarily on the mammary gland by promoting lactation. This chain is Prolactin (PRL), found in Macaca mulatta (Rhesus macaque).